The chain runs to 143 residues: Synuclein (143 aa).

Repeat copies occupy residues 20–30 (EKTKQGVQDAA), 31–41 (EKTKQGVQDAA), and 42–52 (EKTKEGVMYVG). Residues 20–78 (EKTKQGVQDAAEKTKQGVQDAAEKTKEGVMYVGTKTKEGVVQSVNTVTEKTKEQANVVG) form a 5 X 11 AA tandem repeats of [EGST]-K-T-K-[EQ]-[GQ]-[VA]-X(4) region. The 4; approximate repeat unit spans residues 53–67 (TKTKEGVVQSVNTVT). The stretch at 68–78 (EKTKEQANVVG) is repeat 5. The interval 113–143 (REIPAEQVAEGKQTTQEPLVEATEATEETGK) is disordered.

The protein belongs to the synuclein family. In terms of tissue distribution, nervous system tissue. Found in the electric lobe, the brain and the spinal cord.

It localises to the nucleus. In terms of biological role, may have a role in synaptic regulation or signal transduction. This Tetronarce californica (Pacific electric ray) protein is Synuclein.